A 119-amino-acid chain; its full sequence is Phosphoribosyl-AMP cyclohydrolase (119 aa).

Mg(2+) is bound at residue aspartate 77. Cysteine 78 contacts Zn(2+). The Mg(2+) site is built by aspartate 79 and aspartate 81. Zn(2+) contacts are provided by cysteine 94 and cysteine 101.

The protein belongs to the PRA-CH family. In terms of assembly, homodimer. Mg(2+) is required as a cofactor. It depends on Zn(2+) as a cofactor.

The protein resides in the cytoplasm. It catalyses the reaction 1-(5-phospho-beta-D-ribosyl)-5'-AMP + H2O = 1-(5-phospho-beta-D-ribosyl)-5-[(5-phospho-beta-D-ribosylamino)methylideneamino]imidazole-4-carboxamide. The protein operates within amino-acid biosynthesis; L-histidine biosynthesis; L-histidine from 5-phospho-alpha-D-ribose 1-diphosphate: step 3/9. Functionally, catalyzes the hydrolysis of the adenine ring of phosphoribosyl-AMP. The polypeptide is Phosphoribosyl-AMP cyclohydrolase (Cereibacter sphaeroides (strain ATCC 17025 / ATH 2.4.3) (Rhodobacter sphaeroides)).